We begin with the raw amino-acid sequence, 510 residues long: NAD(P)H-quinone oxidoreductase subunit 2 B, chloroplastic (510 aa).

13 helical membrane passes run 24-44 (LLLFHGSFILPECILIFGLIL), 57-77 (IPWLYFISSTSLVMSITALLF), 99-119 (IFQFLILLCSTLCIPLSVEYI), 124-144 (MAITEFLLFVLTATLGGMFLC), 150-170 (ITIFVAPECFSLCSYLLSGYT), 183-203 (YLLMGGASSSILVHGFSWLYG), 229-249 (ISIALIFITVGIGFKLSPAPF), 295-315 (WHLLLEILAILSMILGNLVAI), 323-343 (MLAYSSIGQIGYVIIGIIVGD), 347-367 (GYASMITYMLFYISMNLGTFA), 395-415 (ALSSALCLLSLGGLPPLAGFF), 418-438 (LHLFWCGWQAGLYFLVSIGLL), and 484-504 (MIVCVIASTIPGISMNPIIAI).

The protein belongs to the complex I subunit 2 family. As to quaternary structure, NDH is composed of at least 16 different subunits, 5 of which are encoded in the nucleus.

The protein resides in the plastid. It localises to the chloroplast thylakoid membrane. The enzyme catalyses a plastoquinone + NADH + (n+1) H(+)(in) = a plastoquinol + NAD(+) + n H(+)(out). It carries out the reaction a plastoquinone + NADPH + (n+1) H(+)(in) = a plastoquinol + NADP(+) + n H(+)(out). In terms of biological role, NDH shuttles electrons from NAD(P)H:plastoquinone, via FMN and iron-sulfur (Fe-S) centers, to quinones in the photosynthetic chain and possibly in a chloroplast respiratory chain. The immediate electron acceptor for the enzyme in this species is believed to be plastoquinone. Couples the redox reaction to proton translocation, and thus conserves the redox energy in a proton gradient. The protein is NAD(P)H-quinone oxidoreductase subunit 2 B, chloroplastic of Ceratophyllum demersum (Rigid hornwort).